A 393-amino-acid polypeptide reads, in one-letter code: L-methionine gamma-lyase (393 aa).

Pyridoxal 5'-phosphate-binding positions include 63-65 (YQR) and 93-94 (GM). Tyr119 lines the L-homocysteine pocket. 206–208 (SAT) is a binding site for pyridoxal 5'-phosphate. Lys209 carries the N6-(pyridoxal phosphate)lysine modification. Arg367 is an L-homocysteine binding site. Residue Arg367 coordinates L-methionine.

Belongs to the trans-sulfuration enzymes family. L-methionine gamma-lyase subfamily. As to quaternary structure, homotetramer. It depends on pyridoxal 5'-phosphate as a cofactor.

It catalyses the reaction L-methionine + H2O = methanethiol + 2-oxobutanoate + NH4(+). The enzyme catalyses L-homocysteine + H2O = 2-oxobutanoate + hydrogen sulfide + NH4(+) + H(+). In terms of biological role, catalyzes the alpha,gamma-elimination of L-methionine to produce methanethiol, 2-oxobutanoate and ammonia. Is also able to catalyze the alpha,gamma-elimination of L-homocysteine. The sequence is that of L-methionine gamma-lyase from Brevibacterium sandarakinum.